The primary structure comprises 957 residues: MSRALDPHTDFIPRHIGPTAADQEKMLAAIGCGSLDALLQEVVPPAIRSQGPLALPASRSESDVLADLKAVAGRNRIYRNYIGQGYYGTHTPNVVLRNVLENPAWYTAYTPYQPEISQGRLEALLNYQTMVADLTGLDISNASLLDEGTAAAEAMTLARRGSKSASQVFFVSAHCHPQTIEVVRTRAEGLGIEVALGDEAQGLPECFGVLLQYPHSLGGVADYRALAEAAHAQGAVVACATDLLALALMTPPGEWGADIAIGSSQRFGVPFGFGGPHAGFMACKDAYKRNMPGRLVGVSKDAQGNPALRLALQTREQHIRREKATSNICTAQVLLAVMAGLYAVWHGPDGIRRIATRVHRYTAILRAALTQLGIKVVNDTFFDTLLLETGVATPAIVEAAVCEHINLRRVDGARLAVSLDETVTAADLQALVNVFAAGLQKDDLALDIDAHDAAAPGGIPAALQRQGGILAHPVFSSIQSETDMLRYLRKLADKDLALDRSMIPLGSCTMKLNATAEMIPITWPEFALIHPYAPADQSAGYRELIERLSKALCEITGYDDISLQPNSGAQGEYAGLLAIRGYHRANGQAQRNVCLIPASAHGTNPASAQLAGMEVVVVASDANGNVDLDDLRAKLTQVGDRLAALMITYPSTHGVFEESITHICDLVHQAGGQVYLDGANMNAMVGVARPGKFGSDVSHLNLHKTFCIPHGGGGPGVGPVAVRSHLAPFLPGVLNAQGKLGGETGIGPVAAAPYGSAGILPISYAYIALMGADGLRRATEVAILNANYVAARLRDYYPVLYAGRNGRVAHECILDVRPLKDSSGISAEDIAKRLMDYGFHAPTMSFPVAGTLMVEPTESEGLAELERFIDAMIAIREEIAQVERGERDRDDNVLKNAPHTAQMLLAEEWLHDYPRQQAAYPVASLRDAKYWPPVARVDNAYGDRNLVCACLPVEAYA.

The residue at position 704 (Lys-704) is an N6-(pyridoxal phosphate)lysine.

The protein belongs to the GcvP family. As to quaternary structure, the glycine cleavage system is composed of four proteins: P, T, L and H. Pyridoxal 5'-phosphate is required as a cofactor.

It carries out the reaction N(6)-[(R)-lipoyl]-L-lysyl-[glycine-cleavage complex H protein] + glycine + H(+) = N(6)-[(R)-S(8)-aminomethyldihydrolipoyl]-L-lysyl-[glycine-cleavage complex H protein] + CO2. In terms of biological role, the glycine cleavage system catalyzes the degradation of glycine. The P protein binds the alpha-amino group of glycine through its pyridoxal phosphate cofactor; CO(2) is released and the remaining methylamine moiety is then transferred to the lipoamide cofactor of the H protein. This Bordetella petrii (strain ATCC BAA-461 / DSM 12804 / CCUG 43448) protein is Glycine dehydrogenase (decarboxylating).